The primary structure comprises 64 residues: Potassium channel toxin alpha-KTx J123 (64 aa).

The N-terminal stretch at 1–21 (MNKVYLVAVLVLFLALTINES) is a signal peptide. Cystine bridges form between cysteine 30–cysteine 52, cysteine 37–cysteine 60, and cysteine 41–cysteine 62.

Belongs to the short scorpion toxin superfamily. Potassium channel inhibitor family. Alpha-KTx 11 subfamily. Expressed by the venom gland.

It localises to the secreted. Its function is as follows. This recombinant toxin inhibits mammalian voltage-gated potassium channels Kv1.3/KCNA3 (IC(50)=0.79 nM) and Kv1.2/KCNA2 (IC(50)=26.4 nM). The polypeptide is Potassium channel toxin alpha-KTx J123 (Olivierus martensii (Manchurian scorpion)).